Here is a 637-residue protein sequence, read N- to C-terminus: tRNA uridine 5-carboxymethylaminomethyl modification enzyme MnmG (637 aa).

Residues 15–20 (GAGHAG), isoleucine 127, and serine 182 each bind FAD. 276 to 290 (GPRYCPSIEDKIVRF) lines the NAD(+) pocket. An FAD-binding site is contributed by glutamine 373.

Belongs to the MnmG family. As to quaternary structure, homodimer. Heterotetramer of two MnmE and two MnmG subunits. Requires FAD as cofactor.

The protein resides in the cytoplasm. Functionally, NAD-binding protein involved in the addition of a carboxymethylaminomethyl (cmnm) group at the wobble position (U34) of certain tRNAs, forming tRNA-cmnm(5)s(2)U34. The chain is tRNA uridine 5-carboxymethylaminomethyl modification enzyme MnmG from Streptococcus pneumoniae (strain ATCC BAA-255 / R6).